A 317-amino-acid polypeptide reads, in one-letter code: Aspartate carbamoyltransferase catalytic subunit (317 aa).

Carbamoyl phosphate-binding residues include arginine 65 and threonine 66. Lysine 93 provides a ligand contact to L-aspartate. The carbamoyl phosphate site is built by arginine 115, histidine 145, and glutamine 148. Positions 178 and 233 each coordinate L-aspartate. Carbamoyl phosphate contacts are provided by glycine 274 and proline 275.

Belongs to the aspartate/ornithine carbamoyltransferase superfamily. ATCase family. As to quaternary structure, heterododecamer (2C3:3R2) of six catalytic PyrB chains organized as two trimers (C3), and six regulatory PyrI chains organized as three dimers (R2).

It catalyses the reaction carbamoyl phosphate + L-aspartate = N-carbamoyl-L-aspartate + phosphate + H(+). It functions in the pathway pyrimidine metabolism; UMP biosynthesis via de novo pathway; (S)-dihydroorotate from bicarbonate: step 2/3. Catalyzes the condensation of carbamoyl phosphate and aspartate to form carbamoyl aspartate and inorganic phosphate, the committed step in the de novo pyrimidine nucleotide biosynthesis pathway. In Bordetella bronchiseptica (strain ATCC BAA-588 / NCTC 13252 / RB50) (Alcaligenes bronchisepticus), this protein is Aspartate carbamoyltransferase catalytic subunit.